The chain runs to 108 residues: Latartoxin-2c (108 aa).

The signal sequence occupies residues 1-19 (MKVLVITALCFILLQNVLG). Residues 20–42 (EDTYEDLQNYIENLINENQDEAR) constitute a propeptide, removed in mature form. The Processing quadruplet motif motif lies at 39–42 (DEAR). Disulfide bonds link C44-C61, C51-C72, C60-C84, and C74-C82. At I107 the chain carries Isoleucine amide.

This sequence belongs to the neurotoxin 19 (CSTX) family. 11 (latartoxin) subfamily. Contains 4 disulfide bonds. In terms of processing, cleavage of the propeptide depends on the processing quadruplet motif (XXXR, with at least one of X being E). As to expression, expressed by the venom gland.

It is found in the secreted. Functionally, insect toxin. This Lachesana tarabaevi (Spider) protein is Latartoxin-2c.